A 498-amino-acid chain; its full sequence is ATP synthase subunit beta, chloroplastic (498 aa).

Position 6 is a phosphothreonine (T6). S13 is modified (phosphoserine). ATP is bound at residue 172 to 179 (GGAGVGKT).

Belongs to the ATPase alpha/beta chains family. In terms of assembly, F-type ATPases have 2 components, CF(1) - the catalytic core - and CF(0) - the membrane proton channel. CF(1) has five subunits: alpha(3), beta(3), gamma(1), delta(1), epsilon(1). CF(0) has four main subunits: a(1), b(1), b'(1) and c(9-12).

It localises to the plastid. Its subcellular location is the chloroplast thylakoid membrane. It carries out the reaction ATP + H2O + 4 H(+)(in) = ADP + phosphate + 5 H(+)(out). Produces ATP from ADP in the presence of a proton gradient across the membrane. The catalytic sites are hosted primarily by the beta subunits. The polypeptide is ATP synthase subunit beta, chloroplastic (Olimarabidopsis pumila (Dwarf rocket)).